The primary structure comprises 110 residues: Protein RnfH (110 aa).

The tract at residues 86–110 (RKRAAQQAKDQEEKKKAEKSANKEN) is disordered. Basic and acidic residues predominate over residues 94-110 (KDQEEKKKAEKSANKEN).

This sequence belongs to the UPF0125 (RnfH) family.

The polypeptide is Protein RnfH (Mannheimia succiniciproducens (strain KCTC 0769BP / MBEL55E)).